Here is a 232-residue protein sequence, read N- to C-terminus: Phosphatidylserine decarboxylase proenzyme (232 aa).

The active-site Schiff-base intermediate with substrate; via pyruvic acid is the Ser190. Ser190 carries the post-translational modification Pyruvic acid (Ser); by autocatalysis.

This sequence belongs to the phosphatidylserine decarboxylase family. PSD-A subfamily. In terms of assembly, heterodimer of a large membrane-associated beta subunit and a small pyruvoyl-containing alpha subunit. The cofactor is pyruvate. Post-translationally, is synthesized initially as an inactive proenzyme. Formation of the active enzyme involves a self-maturation process in which the active site pyruvoyl group is generated from an internal serine residue via an autocatalytic post-translational modification. Two non-identical subunits are generated from the proenzyme in this reaction, and the pyruvate is formed at the N-terminus of the alpha chain, which is derived from the carboxyl end of the proenzyme. The post-translation cleavage follows an unusual pathway, termed non-hydrolytic serinolysis, in which the side chain hydroxyl group of the serine supplies its oxygen atom to form the C-terminus of the beta chain, while the remainder of the serine residue undergoes an oxidative deamination to produce ammonia and the pyruvoyl prosthetic group on the alpha chain.

Its subcellular location is the cell membrane. The enzyme catalyses a 1,2-diacyl-sn-glycero-3-phospho-L-serine + H(+) = a 1,2-diacyl-sn-glycero-3-phosphoethanolamine + CO2. It participates in phospholipid metabolism; phosphatidylethanolamine biosynthesis; phosphatidylethanolamine from CDP-diacylglycerol: step 2/2. Functionally, catalyzes the formation of phosphatidylethanolamine (PtdEtn) from phosphatidylserine (PtdSer). The chain is Phosphatidylserine decarboxylase proenzyme from Bartonella bacilliformis (strain ATCC 35685 / KC583 / Herrer 020/F12,63).